The sequence spans 166 residues: Anaerobic nitrite reductase NSHB1 (166 aa).

Residues 13–163 (SFSEEQEALV…LVAAIKQEMK (151 aa)) enclose the Globin domain. The Homodimerization signature appears at 46 to 50 (EVAPS). Heme b is bound by residues S56, K70, H74, R104, T108, and H109. Residues 116-128 (DAHFEVVKFALLD) carry the Homodimerization motif.

It belongs to the plant globin family. As to quaternary structure, homodimer. Requires heme b as cofactor. As to expression, expressed in coleoptiles, embryos, leaves, seminal roots and roots.

The protein resides in the cytoplasm. It localises to the nucleus. It catalyses the reaction Fe(III)-heme b-[protein] + nitric oxide + H2O = Fe(II)-heme b-[protein] + nitrite + 2 H(+). Its activity is regulated as follows. Slowly reduced by ascorbic acid (AA); this reaction may become a source of nitric oxide (NO) during hypoxia. Functionally, phytoglobin that reduces nitrite to nitric oxide under anoxic conditions (e.g. during flooding or in waterlogged soil). May not function as an oxygen storage or transport protein. Has an unusually high affinity for O(2) through a hexacoordinate heme iron because of a very low dissociation constant. The chain is Anaerobic nitrite reductase NSHB1 from Oryza sativa subsp. japonica (Rice).